Here is a 714-residue protein sequence, read N- to C-terminus: RB-associated KRAB zinc finger protein (714 aa).

In terms of domain architecture, KRAB spans 8 to 79 (VSFKDVAVDF…GGEFPCQHSP (72 aa)). Glycyl lysine isopeptide (Lys-Gly) (interchain with G-Cter in SUMO2) cross-links involve residues Lys97 and Lys259. The segment at 171 to 260 (TYHGEKMCEF…YQRSQMEMKP (90 aa)) is required for interaction with RB1. C2H2-type zinc fingers lie at residues 261 to 283 (FECSECGKSFCKKSKFIIHQRAH) and 289 to 311 (YECNVCGKSFSQKGTLTVHRRSH). A Glycyl lysine isopeptide (Lys-Gly) (interchain with G-Cter in SUMO2) cross-link involves residue Lys315. C2H2-type zinc fingers lie at residues 317 to 339 (YKCNECGKTFCQKLHLTQHLRTH), 345 to 367 (YECSECGKTFCQKTHLTLHQRNH), 373 to 395 (YPCNECGKSFSRKSALSDHQRTH), 401 to 423 (YKCNECGKSYYRKSTLITHQRTH), 429 to 451 (YQCSECGKFFSRVSYLTIHYRSH), 457 to 479 (YECNECGKTFNLNSAFIRHRKVH), and 485 to 505 (HECSECGKFSQLYLTDHHTAH). Lys357 participates in a covalent cross-link: Glycyl lysine isopeptide (Lys-Gly) (interchain with G-Cter in SUMO2). Positions 417-714 (ITHQRTHTGE…NMNVLDVENL (298 aa)) are interaction with AR. The C2H2-type 10; degenerate zinc-finger motif lies at 511–533 (YECNECGKTFLVNSAFDGHQPLP). Glycyl lysine isopeptide (Lys-Gly) (interchain with G-Cter in SUMO2) cross-links involve residues Lys534 and Lys537. 6 C2H2-type zinc fingers span residues 539-561 (YECNVCGKLFNELSYYTEHYRSH), 567-589 (YGCSECGKTFSHNSSLFRHQRVH), 595-617 (YECYECGKFFSQKSYLTIHHRIH), 623-645 (YECSKCGKVFSRMSNLTVHYRSH), 651-673 (YECNECGKVFSQKSYLTVHYRTH), and 679-701 (YECNECGKKFHHRSAFNSHQRIH).

It belongs to the krueppel C2H2-type zinc-finger protein family. Interacts with AR and RB1. May also interact with other nuclear hormone receptors such as NR3C1/GR. In terms of tissue distribution, expressed in bone, brain, heart, kidney, liver, lung, pancreas and placenta.

Its subcellular location is the nucleus. May repress E2F-dependent transcription. May promote AR-dependent transcription. This chain is RB-associated KRAB zinc finger protein (RBAK), found in Homo sapiens (Human).